Here is a 137-residue protein sequence, read N- to C-terminus: Large ribosomal subunit protein uL16 (137 aa).

It belongs to the universal ribosomal protein uL16 family. Part of the 50S ribosomal subunit.

Its function is as follows. Binds 23S rRNA and is also seen to make contacts with the A and possibly P site tRNAs. This is Large ribosomal subunit protein uL16 from Aromatoleum aromaticum (strain DSM 19018 / LMG 30748 / EbN1) (Azoarcus sp. (strain EbN1)).